The sequence spans 130 residues: Splicing regulatory small protein (130 aa).

Residues 1–10 (MRTKPQRPRA) show a composition bias toward basic residues. 2 disordered regions span residues 1–29 (MRTK…EETG) and 74–130 (GRAL…STRR). The mediates interaction with SRSF3 stretch occupies residues 16 to 22 (GQPCGSP). Residues 77-98 (LEPKADPHTCPYGRKESRGEKV) are compositionally biased toward basic and acidic residues. Residues 120-130 (SLKSGSPSTRR) are compositionally biased toward polar residues.

In terms of assembly, interacts with SRSF3; increases SRSF3 binding to specific exons.

Its subcellular location is the nucleus. Interacts with the splicing factor SRSF3 and increases its binding to specific exons within pre-mRNA, thereby regulating exon-inclusion during alternative splicing. Does not directly bind pre-mRNA and could regulate a wider range of splicing factors through a similar mechanism. This Homo sapiens (Human) protein is Splicing regulatory small protein.